Here is a 783-residue protein sequence, read N- to C-terminus: Probable potassium transporter 2 (783 aa).

Residues 1-21 lie on the Cytoplasmic side of the membrane; the sequence is MDAEAGVGGADQLPWRQHYRN. A helical transmembrane segment spans residues 22–42; it reads LLLLAYQSFGVVYGDLSTSPL. At 43-61 the chain is on the extracellular side; it reads YVYKSTFSGRLRRYQDEQT. The chain crosses the membrane as a helical span at residues 62–82; the sequence is VFGVLSLIFWTFTLIPLLKYV. Over 83-152 the chain is Cytoplasmic; the sequence is TIVLSADDNG…FMEKHKNART (70 aa). The chain crosses the membrane as a helical span at residues 153 to 173; the sequence is VLLLIVLCGASMMIGDGILTP. Over 174 to 189 the chain is Extracellular; the sequence is AISVLSSMSGLKVRAT. A helical transmembrane segment spans residues 190–210; that stretch reads GLHDRSVVLLSCIVLVGLFAL. At 211-217 the chain is on the cytoplasmic side; sequence QHRGTQK. A helical transmembrane segment spans residues 218–238; that stretch reads VAFMFAPIVVIWLFCIGGIGL. Residues 239–268 are Extracellular-facing; it reads YNIIHWNPRIYQALSPYYIVKFFRTTGKDG. A helical transmembrane segment spans residues 269–289; it reads WIALGGILLSMTGCEAMFADL. Residues 290 to 298 lie on the Cytoplasmic side of the membrane; sequence GHFTSASVR. Residues 299 to 319 traverse the membrane as a helical segment; it reads LAFITIIYPCLILQYMGQAAF. Residues 320–338 lie on the Extracellular side of the membrane; sequence LSKNILDMPTGFYDSIPGP. A helical transmembrane segment spans residues 339–359; the sequence is IFWPVFVVATLAAVVGSQAVI. At 360–390 the chain is on the cytoplasmic side; that stretch reads SATFSIVKQCHSLGCFPRVKVVHTSRWIYGQ. A helical membrane pass occupies residues 391–411; sequence IYIPEINWILMVLCVAVTVAF. Over 412–422 the chain is Extracellular; the sequence is RDITLIGNAYG. The helical transmembrane segment at 423–443 threads the bilayer; sequence VACMTVMFVTTFLMALIMIFV. Topologically, residues 444–447 are cytoplasmic; that stretch reads WQKN. Residues 448 to 468 form a helical membrane-spanning segment; it reads IIFALSFFLLFGSVEVVYLSS. Over 469-475 the chain is Extracellular; the sequence is SLMKVTQ. Residues 476 to 496 form a helical membrane-spanning segment; sequence GGWVPLVLALIFMSVMYIWHY. The Cytoplasmic segment spans residues 497 to 783; the sequence is GTRKKYQYDL…LIEVGMAYQV (287 aa). The tract at residues 662–691 is disordered; that stretch reads DLADSMTMRSTKSESLRSLQSSYEQESPNV. The span at 677-691 shows a compositional bias: polar residues; that stretch reads LRSLQSSYEQESPNV.

This sequence belongs to the HAK/KUP transporter (TC 2.A.72.3) family.

The protein localises to the cell membrane. The catalysed reaction is K(+)(in) = K(+)(out). It carries out the reaction Na(+)(in) = Na(+)(out). Its function is as follows. High-affinity potassium transporter. Can transport sodium under high sodium and low potassium concentrations in the extracellular environment. The protein is Probable potassium transporter 2 (HAK2) of Oryza sativa subsp. japonica (Rice).